The chain runs to 92 residues: Small ribosomal subunit protein uS19 (92 aa).

The protein belongs to the universal ribosomal protein uS19 family.

Functionally, protein S19 forms a complex with S13 that binds strongly to the 16S ribosomal RNA. The sequence is that of Small ribosomal subunit protein uS19 from Borreliella afzelii (strain PKo) (Borrelia afzelii).